The chain runs to 175 residues: uncharacterized protein (175 aa).

This is an uncharacterized protein from Human cytomegalovirus (strain AD169) (HHV-5).